The sequence spans 281 residues: ATP synthase gamma chain (281 aa).

This sequence belongs to the ATPase gamma chain family. In terms of assembly, F-type ATPases have 2 components, CF(1) - the catalytic core - and CF(0) - the membrane proton channel. CF(1) has five subunits: alpha(3), beta(3), gamma(1), delta(1), epsilon(1). CF(0) has three main subunits: a, b and c.

It localises to the cell membrane. Its function is as follows. Produces ATP from ADP in the presence of a proton gradient across the membrane. The gamma chain is believed to be important in regulating ATPase activity and the flow of protons through the CF(0) complex. The chain is ATP synthase gamma chain from Mesoplasma florum (strain ATCC 33453 / NBRC 100688 / NCTC 11704 / L1) (Acholeplasma florum).